The chain runs to 289 residues: 33 kDa chaperonin (289 aa).

Cystine bridges form between Cys-230–Cys-232 and Cys-263–Cys-266.

Belongs to the HSP33 family. Under oxidizing conditions two disulfide bonds are formed involving the reactive cysteines. Under reducing conditions zinc is bound to the reactive cysteines and the protein is inactive.

The protein resides in the cytoplasm. Functionally, redox regulated molecular chaperone. Protects both thermally unfolding and oxidatively damaged proteins from irreversible aggregation. Plays an important role in the bacterial defense system toward oxidative stress. This Shigella flexneri serotype 5b (strain 8401) protein is 33 kDa chaperonin.